The primary structure comprises 154 residues: Protein X (154 aa).

The tract at residues 28–48 is disordered; that stretch reads RPLPGPLGTLPPASPPAVPTD. The interval 68 to 117 is mitochondrial targeting sequence; sequence PCALRFTSARRMETTVNAHGNLPKVLHKRTLGLSAMSTTDLEAYFKDCVF.

It belongs to the orthohepadnavirus protein X family. As to quaternary structure, may form homodimer. May interact with host CEBPA, CFLAR, CREB1, DDB1, E4F1, HBXIP, HSPD1/HSP60, NFKBIA, POLR2E and SMAD4. Interacts with host SMC5-SMC6 complex and induces its degradation. Interacts with host TRPC4AP; leading to prevent ubiquitination of TRPC4AP. Interacts with host PLSCR1; this interaction promotes ubiquitination and degradation of HBx and impairs HBx-mediated cell proliferation. A fraction may be phosphorylated in insect cells and HepG2 cells, a human hepatoblastoma cell line. Phosphorylated in vitro by host protein kinase C or mitogen-activated protein kinase. N-acetylated in insect cells.

It is found in the host cytoplasm. The protein localises to the host nucleus. It localises to the host mitochondrion. Functionally, multifunctional protein that plays a role in silencing host antiviral defenses and promoting viral transcription. Does not seem to be essential for HBV infection. May be directly involved in development of cirrhosis and liver cancer (hepatocellular carcinoma). Most of cytosolic activities involve modulation of cytosolic calcium. The effect on apoptosis is controversial depending on the cell types in which the studies have been conducted. May induce apoptosis by localizing in mitochondria and causing loss of mitochondrial membrane potential. May also modulate apoptosis by binding host CFLAR, a key regulator of the death-inducing signaling complex (DISC). Promotes viral transcription by using the host E3 ubiquitin ligase DDB1 to target the SMC5-SMC6 complex to proteasomal degradation. This host complex would otherwise bind to viral episomal DNA, and prevents its transcription. Moderately stimulates transcription of many different viral and cellular transcription elements. Promoters and enhancers stimulated by HBx contain DNA binding sites for NF-kappa-B, AP-1, AP-2, c-EBP, ATF/CREB, or the calcium-activated factor NF-AT. This is Protein X from Hepatitis B virus genotype B2 subtype adw (isolate China/patient4/1996) (HBV-B).